The following is a 349-amino-acid chain: Holliday junction branch migration complex subunit RuvB (349 aa).

Residues 1–15 show a composition bias toward basic and acidic residues; the sequence is MSDDYRETDPTRQPE. Residues 1–25 are disordered; that stretch reads MSDDYRETDPTRQPEDMGEGSLRPE. The interval 1–183 is large ATPase domain (RuvB-L); the sequence is MSDDYRETDP…FGIPLRLVFY (183 aa). ATP-binding positions include leucine 22, arginine 23, glycine 64, lysine 67, threonine 68, threonine 69, 130–132, arginine 173, tyrosine 183, and arginine 220; that span reads EDF. Position 68 (threonine 68) interacts with Mg(2+). The interval 184–254 is small ATPAse domain (RuvB-S); the sequence is TPEELRAIVS…LADAALGRLE (71 aa). Residues 257–349 are head domain (RuvB-H); the sequence is ERGLDAMDRR…SSLEQDDSAP (93 aa). The DNA site is built by arginine 293, arginine 312, and arginine 317.

It belongs to the RuvB family. Homohexamer. Forms an RuvA(8)-RuvB(12)-Holliday junction (HJ) complex. HJ DNA is sandwiched between 2 RuvA tetramers; dsDNA enters through RuvA and exits via RuvB. An RuvB hexamer assembles on each DNA strand where it exits the tetramer. Each RuvB hexamer is contacted by two RuvA subunits (via domain III) on 2 adjacent RuvB subunits; this complex drives branch migration. In the full resolvosome a probable DNA-RuvA(4)-RuvB(12)-RuvC(2) complex forms which resolves the HJ.

The protein resides in the cytoplasm. The catalysed reaction is ATP + H2O = ADP + phosphate + H(+). The RuvA-RuvB-RuvC complex processes Holliday junction (HJ) DNA during genetic recombination and DNA repair, while the RuvA-RuvB complex plays an important role in the rescue of blocked DNA replication forks via replication fork reversal (RFR). RuvA specifically binds to HJ cruciform DNA, conferring on it an open structure. The RuvB hexamer acts as an ATP-dependent pump, pulling dsDNA into and through the RuvAB complex. RuvB forms 2 homohexamers on either side of HJ DNA bound by 1 or 2 RuvA tetramers; 4 subunits per hexamer contact DNA at a time. Coordinated motions by a converter formed by DNA-disengaged RuvB subunits stimulates ATP hydrolysis and nucleotide exchange. Immobilization of the converter enables RuvB to convert the ATP-contained energy into a lever motion, pulling 2 nucleotides of DNA out of the RuvA tetramer per ATP hydrolyzed, thus driving DNA branch migration. The RuvB motors rotate together with the DNA substrate, which together with the progressing nucleotide cycle form the mechanistic basis for DNA recombination by continuous HJ branch migration. Branch migration allows RuvC to scan DNA until it finds its consensus sequence, where it cleaves and resolves cruciform DNA. This Gluconobacter oxydans (strain 621H) (Gluconobacter suboxydans) protein is Holliday junction branch migration complex subunit RuvB.